The primary structure comprises 112 residues: Protein F-112 (112 aa).

In terms of biological role, essential for virus function. The polypeptide is Protein F-112 (Saccharolobus solfataricus (Sulfolobus solfataricus)).